Consider the following 42-residue polypeptide: Large ribosomal subunit protein eL32 (42 aa).

The protein belongs to the eukaryotic ribosomal protein eL32 family.

In Zea mays (Maize), this protein is Large ribosomal subunit protein eL32 (RPL32).